A 408-amino-acid chain; its full sequence is Histidine--tRNA ligase (408 aa).

It belongs to the class-II aminoacyl-tRNA synthetase family. As to quaternary structure, homodimer.

Its subcellular location is the cytoplasm. The enzyme catalyses tRNA(His) + L-histidine + ATP = L-histidyl-tRNA(His) + AMP + diphosphate + H(+). The sequence is that of Histidine--tRNA ligase from Campylobacter jejuni subsp. jejuni serotype O:6 (strain 81116 / NCTC 11828).